The following is a 330-amino-acid chain: MSAAATADTTSPHIPVLLPAILDAVAPVQGVWLDGTFGAGGYTRGLLEAGADRVIAVDRDPLAFEMAADWAGSYGTRLVQQPGVFSEMDTYAVALDGVVLDLGVSSMQLDLAERGFSFMRDGPLDMRMSQEGPSAADIVNEASAETLANILFQYGEERASRRIAKAILTERALAPITTTLHLAGIIERCLPRAKPGQSHPATRSFQALRIAVNDEYGELYQGLMAAERALKPGGQLAVVTFHSVEDRMVKRFLTARAGAGGNANRFAPEVQRDAPAFTLRSRKAIVADDAEVAANPRARSAKLRIAVRTQAPAGVIDAKSVGMPVVKVGN.

S-adenosyl-L-methionine-binding positions include 40 to 42 (GGY), aspartate 58, phenylalanine 85, aspartate 101, and glutamine 108.

Belongs to the methyltransferase superfamily. RsmH family.

It localises to the cytoplasm. It catalyses the reaction cytidine(1402) in 16S rRNA + S-adenosyl-L-methionine = N(4)-methylcytidine(1402) in 16S rRNA + S-adenosyl-L-homocysteine + H(+). In terms of biological role, specifically methylates the N4 position of cytidine in position 1402 (C1402) of 16S rRNA. The protein is Ribosomal RNA small subunit methyltransferase H of Roseobacter denitrificans (strain ATCC 33942 / OCh 114) (Erythrobacter sp. (strain OCh 114)).